Here is a 1006-residue protein sequence, read N- to C-terminus: UPF0182 protein Arth_2749 (1006 aa).

Helical transmembrane passes span 18–38 (GALTPTLIVVALVVVGFIFFA), 64–84 (IIIFLAGFALMFVAMFYAIRI), 115–135 (VVMIGLPVLFGLFAGSAAASQ), 168–188 (FLGFVTGFLISVVVVAGIAGI), 211–231 (QIHLAVTGAVFLLLLGVNFWL), 260–280 (SILAVAAALVAILFIVAAVIG), and 287–307 (IGTAMLVITSILAGGVYPWVI). Disordered stretches follow at residues 490-519 (GAPEGSPHREQDRPAGKEGDGETQYTFTGN), 896-923 (KAGDFANNGQTPPPAAGGSTPPATGGTD), and 975-1006 (LGSEGASPTPGATTAPTATPSAAATPSPSPSN). Positions 495–509 (SPHREQDRPAGKEGD) are enriched in basic and acidic residues. Composition is skewed to low complexity over residues 911–923 (AGGSTPPATGGTD) and 979–1000 (GASPTPGATTAPTATPSAAATP).

Belongs to the UPF0182 family.

The protein localises to the cell membrane. The polypeptide is UPF0182 protein Arth_2749 (Arthrobacter sp. (strain FB24)).